The chain runs to 150 residues: Large ribosomal subunit protein bL9 (150 aa).

It belongs to the bacterial ribosomal protein bL9 family.

Its function is as follows. Binds to the 23S rRNA. In Alteromonas mediterranea (strain DSM 17117 / CIP 110805 / LMG 28347 / Deep ecotype), this protein is Large ribosomal subunit protein bL9.